A 136-amino-acid polypeptide reads, in one-letter code: Large-conductance mechanosensitive channel (136 aa).

2 helical membrane-spanning segments follow: residues 9–29 (AFASRGNVIDMAVGIIIGAAF) and 79–99 (IQTVIDFTIIAFAIFMGLKAI).

The protein belongs to the MscL family. As to quaternary structure, homopentamer.

The protein localises to the cell inner membrane. Channel that opens in response to stretch forces in the membrane lipid bilayer. May participate in the regulation of osmotic pressure changes within the cell. The protein is Large-conductance mechanosensitive channel of Shewanella sp. (strain MR-4).